Consider the following 957-residue polypeptide: SLIT and NTRK-like protein 5 (957 aa).

An N-terminal signal peptide occupies residues 1–40 (MHVCCPPVTLEQDLHRKMHSWMLQTLAFAVTSLVLSCAET). Residues 41 to 664 (IDYYGEICDN…GTGASSVPLS (624 aa)) lie on the Extracellular side of the membrane. 6 LRR repeats span residues 82–103 (PIYH…EFVN), 106–127 (GASI…AFHG), 130–151 (GLRR…TFLG), 154–175 (NLEY…AFGK), 178–199 (MLQV…LFRF), and 201–222 (PLTH…GLLQ). Asn103 is a glycosylation site (N-linked (GlcNAc...) asparagine). Residues 235–286 (NPWNCSCELISLKDWLDSISYSALVGDVVCETPFRLHGRDLDEVSKQELCPR) enclose the LRRCT 1 domain. Positions 317–358 (ATSSSAVYKPPLKPPKGTRQPNKPRVRPTSRQPSKDLGYSNY) are disordered. The region spanning 365–407 (QTKSPVPLECPTACTCNLQISDLGLNVNCQERKIESIAELQPK) is the LRRNT domain. LRR repeat units lie at residues 410–431 (NPKK…DFLE), 434–455 (GLDL…AFGD), 458–479 (NLRR…LFYG), 482–503 (SLQY…TFDP), 506–527 (NLQL…VFSG), and 529–550 (TLLR…GVLD). One can recognise an LRRCT 2 domain in the interval 563 to 614 (NPWDCTCDVVGMKLWIEQLKVGVLVDEVICKAPKKFAETYMRSIKSELLCPD). Positions 623–632 (PTPSSIQVPS) are enriched in low complexity. The disordered stretch occupies residues 623-642 (PTPSSIQVPSRTNAATPAVR). A glycan (N-linked (GlcNAc...) asparagine) is linked at Asn644. The helical transmembrane segment at 665–685 (VLILSLLLVFIMSVFVAAGLF) threads the bilayer. The Cytoplasmic segment spans residues 686-957 (VLVMKRRKKN…LEKQTTFSQF (272 aa)). The disordered stretch occupies residues 789–844 (SNHHLQQQPPPPPQQPQQQPPPQMQMQPGEEERRESHHLRSPAYSVSTIEPREDLL). Residues 796 to 811 (QPPPPPQQPQQQPPPQ) are compositionally biased toward pro residues.

The protein belongs to the SLITRK family. As to expression, in the adult, significant expression is detected only in the brain. In the embryo, expressed in the subventricular zone, cortical plate, pyramidal layer of hippocampus, thalamus and hypothalamus.

It localises to the membrane. Functionally, suppresses neurite outgrowth. In Mus musculus (Mouse), this protein is SLIT and NTRK-like protein 5 (Slitrk5).